The following is a 189-amino-acid chain: MIHALNGKVESIENGKVYVNVNDLIYEIIVGDTGDFEEYINRNVKIYTKMVVNDDGISLYGFLEVIKLKLFEKLIGVNKLGPKSALKIISSNSVESVVSAIINEDVKALSSLPGIGPKTAERIVLELKDTIKELDVSINEKDRKVLEAIEALVTLGFNRNQAKKAVNKVAAKDDKLDDIIKKALRFLSR.

Residues 1-63 (MIHALNGKVE…DDGISLYGFL (63 aa)) are domain I. A domain II region spans residues 64–135 (EVIKLKLFEK…ELKDTIKELD (72 aa)). The tract at residues 135 to 139 (DVSIN) is flexible linker. A domain III region spans residues 140–189 (EKDRKVLEAIEALVTLGFNRNQAKKAVNKVAAKDDKLDDIIKKALRFLSR).

This sequence belongs to the RuvA family. In terms of assembly, homotetramer. Forms an RuvA(8)-RuvB(12)-Holliday junction (HJ) complex. HJ DNA is sandwiched between 2 RuvA tetramers; dsDNA enters through RuvA and exits via RuvB. An RuvB hexamer assembles on each DNA strand where it exits the tetramer. Each RuvB hexamer is contacted by two RuvA subunits (via domain III) on 2 adjacent RuvB subunits; this complex drives branch migration. In the full resolvosome a probable DNA-RuvA(4)-RuvB(12)-RuvC(2) complex forms which resolves the HJ.

It is found in the cytoplasm. Its function is as follows. The RuvA-RuvB-RuvC complex processes Holliday junction (HJ) DNA during genetic recombination and DNA repair, while the RuvA-RuvB complex plays an important role in the rescue of blocked DNA replication forks via replication fork reversal (RFR). RuvA specifically binds to HJ cruciform DNA, conferring on it an open structure. The RuvB hexamer acts as an ATP-dependent pump, pulling dsDNA into and through the RuvAB complex. HJ branch migration allows RuvC to scan DNA until it finds its consensus sequence, where it cleaves and resolves the cruciform DNA. In Thermosipho africanus (strain TCF52B), this protein is Holliday junction branch migration complex subunit RuvA.